The following is a 269-amino-acid chain: Aminoglycoside (3'') (9) adenylyltransferase (269 aa).

It carries out the reaction streptomycin + ATP = 3''-O-adenylylstreptomycin + diphosphate. The catalysed reaction is spectinomycin + ATP = 9-O-adenylylspectinomycin + diphosphate. In terms of biological role, mediates bacterial resistance to the antibiotic spectinomycin and probably also to streptomycin. This is Aminoglycoside (3'') (9) adenylyltransferase from Rhizobium radiobacter (Agrobacterium tumefaciens).